The chain runs to 645 residues: Envelope glycoprotein (645 aa).

An N-terminal signal peptide occupies residues 1-33 (MESPAFSKPLKDKINPWGPLIIMGILVRAGASV). Positions 32–237 (SVQRDSPHQV…QVLNVGPRVP (206 aa)) are receptor-binding domain (RBD). The Extracellular portion of the chain corresponds to 34-585 (QRDSPHQVFN…FNRSPWFTTL (552 aa)). N-linked (GlcNAc...) asparagine; by host glycosylation is found at asparagine 43 and asparagine 58. 2 cysteine pairs are disulfide-bonded: cysteine 113/cysteine 130 and cysteine 122/cysteine 135. A disordered region spans residues 259–286 (PRPPRPPPSGAASMVPGAPPPSQQPGTG). A glycan (N-linked (GlcNAc...) asparagine; by host) is linked at asparagine 301. Intrachain disulfides connect cysteine 311–cysteine 314, cysteine 311–cysteine 538, cysteine 341–cysteine 395, cysteine 360–cysteine 372, cysteine 402–cysteine 415, and cysteine 530–cysteine 537. A CXXC motif is present at residues 311 to 314 (CWLC). 2 N-linked (GlcNAc...) asparagine; by host glycosylation sites follow: asparagine 333 and asparagine 340. 2 N-linked (GlcNAc...) asparagine; by host glycosylation sites follow: asparagine 373 and asparagine 409. The fusion peptide stretch occupies residues 447-467 (VSLTLALLLGGLTMGGIAAGV). The stretch at 490 to 510 (DLGALEKSVSALEKSLTSLSE) forms a coiled coil. Residues 513-529 (LQNRRGLDLLFLKEGGL) are immunosuppression. A CX6CC motif is present at residues 530–538 (CAALKEECC). Residues 586–606 (ISTIMGPLIVLLLILLFGPCI) form a helical membrane-spanning segment. Residue cysteine 605 is the site of S-palmitoyl cysteine; by host attachment. At 607-640 (LNRLVQFVKDRISVVQALVLTQQYHQLKSIDPEE) the chain is on the cytoplasmic side. Residues 630-633 (YHQL) carry the YXXL motif; contains endocytosis signal motif.

As to quaternary structure, the mature envelope protein (Env) consists of a trimer of SU-TM heterodimers attached by a labile interchain disulfide bond. The activated Env consists of SU monomers and TM trimers. In terms of processing, specific enzymatic cleavages in vivo yield mature proteins. Envelope glycoproteins are synthesized as an inactive precursor that is N-glycosylated and processed likely by host cell furin or by a furin-like protease in the Golgi to yield the mature SU and TM proteins. The cleavage site between SU and TM requires the minimal sequence [KR]-X-[KR]-R. The R-peptide is released from the C-terminus of the cytoplasmic tail of the TM protein upon particle formation as a result of proteolytic cleavage by the viral protease. Cleavage of this peptide is required for TM to become fusogenic. The CXXC motif is highly conserved across a broad range of retroviral envelope proteins. It is thought to participate in the formation of a labile disulfide bond possibly with the CX6CC motif present in the transmembrane protein. Isomerization of the intersubunit disulfide bond to an SU intrachain disulfide bond is thought to occur upon receptor recognition in order to allow membrane fusion. Post-translationally, the transmembrane protein is palmitoylated. In terms of processing, the R-peptide is palmitoylated.

It localises to the virion membrane. It is found in the host cell membrane. In terms of biological role, the surface protein (SU) attaches the virus to the host cell by binding to its receptor. This interaction activates a thiol in a CXXC motif of the C-terminal domain, where the other Cys residue participates in the formation of the intersubunit disulfide. The activated thiol will attack the disulfide and cause its isomerization into a disulfide isomer within the motif. This leads to SU displacement and TM refolding, and is thought to activate its fusogenic potential by unmasking its fusion peptide. Fusion occurs at the host cell plasma membrane. Functionally, the transmembrane protein (TM) acts as a class I viral fusion protein. Under the current model, the protein has at least 3 conformational states: pre-fusion native state, pre-hairpin intermediate state, and post-fusion hairpin state. During viral and target cell membrane fusion, the coiled coil regions (heptad repeats) assume a trimer-of-hairpins structure, positioning the fusion peptide in close proximity to the C-terminal region of the ectodomain. The formation of this structure appears to drive apposition and subsequent fusion of viral and target cell membranes. Membranes fusion leads to delivery of the nucleocapsid into the cytoplasm. This is Envelope glycoprotein (env) from Xenotropic MuLV-related virus (isolate VP42) (XMRV).